The following is a 212-amino-acid chain: Casparian strip membrane protein 1 (212 aa).

The tract at residues 1-28 (MDSSNSTKETGDIPIPVTSSKSSKAAPP) is disordered. The Cytoplasmic segment spans residues 1-49 (MDSSNSTKETGDIPIPVTSSKSSKAAPPPVVAAKAKSTTKQPLVSGWKR). Low complexity predominate over residues 16 to 28 (PVTSSKSSKAAPP). A helical transmembrane segment spans residues 50 to 70 (GLGIIDFILRICAIAAALAAA). Over 71-100 (TAMGTTSQQLPFFTQFFQFKADYNDLPAFT) the chain is Extracellular. Residues 101–121 (FFVIANAMAGAYLVLSLPFSI) traverse the membrane as a helical segment. Residues 122-133 (LCIVRPHILGAR) are Cytoplasmic-facing. Residues 134-154 (LMLLVFDTVAVPLVTAAASAA) traverse the membrane as a helical segment. The Extracellular segment spans residues 155 to 186 (ASIVYLAHNGNSDANWVAICRQFNDFCQRVSG). Residues 187 to 207 (AVVASFITALLFVVLVAVSAV) form a helical membrane-spanning segment. Topologically, residues 208 to 212 (ALRQK) are cytoplasmic.

Belongs to the Casparian strip membrane proteins (CASP) family. As to quaternary structure, homodimer and heterodimers.

It is found in the cell membrane. Regulates membrane-cell wall junctions and localized cell wall deposition. Required for establishment of the Casparian strip membrane domain (CSD) and the subsequent formation of Casparian strips, a cell wall modification of the root endodermis that determines an apoplastic barrier between the intraorganismal apoplasm and the extraorganismal apoplasm and prevents lateral diffusion. This Helianthus annuus (Common sunflower) protein is Casparian strip membrane protein 1.